Consider the following 321-residue polypeptide: 2,3,4,5-tetrahydropyridine-2,6-dicarboxylate N-succinyltransferase (321 aa).

The Mg(2+) site is built by D166 and E183. Catalysis depends on E199, which acts as the Acyl-anhydride intermediate. Succinyl-CoA is bound by residues R201, G216, S219, A242, 257-258 (EA), G265, K281, and 294-297 (RRNS).

It belongs to the type 2 tetrahydrodipicolinate N-succinyltransferase family. In terms of assembly, homotrimer.

The protein resides in the cytoplasm. The catalysed reaction is (S)-2,3,4,5-tetrahydrodipicolinate + succinyl-CoA + H2O = (S)-2-succinylamino-6-oxoheptanedioate + CoA. Its pathway is amino-acid biosynthesis; L-lysine biosynthesis via DAP pathway; LL-2,6-diaminopimelate from (S)-tetrahydrodipicolinate (succinylase route): step 1/3. In terms of biological role, catalyzes the conversion of the cyclic tetrahydrodipicolinate (THDP) into the acyclic N-succinyl-L-2-amino-6-oxopimelate using succinyl-CoA. The protein is 2,3,4,5-tetrahydropyridine-2,6-dicarboxylate N-succinyltransferase of Rothia mucilaginosa (strain DY-18) (Stomatococcus mucilaginosus).